A 357-amino-acid polypeptide reads, in one-letter code: Putative F-box protein At5g50220 (357 aa).

The F-box domain maps to 27 to 73 (IAEDIGIPIDLMVEILKKLPAKSLIKFQCVSKQWSSIIGSSRDFIDS).

In Arabidopsis thaliana (Mouse-ear cress), this protein is Putative F-box protein At5g50220.